Here is a 967-residue protein sequence, read N- to C-terminus: Transmembrane channel-like protein 5 (967 aa).

Composition is skewed to polar residues over residues 1–10, 21–31, 53–62, and 168–184; these read MSSFHQNSSY, GSRNHTHNYLE, NPHSSGSRTN, and QDNS…SNLP. Residues 1 to 240 form a disordered region; sequence MSSFHQNSSY…EEGDGYSSSK (240 aa). The Extracellular segment spans residues 1 to 420; the sequence is MSSFHQNSSY…YFSFLRWLLK (420 aa). The helical transmembrane segment at 421-441 threads the bilayer; it reads FNIFSFVMNFSFIIIPQFTVG. The Cytoplasmic segment spans residues 442–449; sequence AKNTLQFT. A helical membrane pass occupies residues 450-470; sequence GLEFFTGAGYFGDTVMYYGFY. Residues 471 to 487 are Extracellular-facing; it reads TNSTIRHRMGGASYNMQ. Residues 488–508 traverse the membrane as a helical segment; sequence LAYIFTIGACLVVCFFSLLFS. The Cytoplasmic segment spans residues 509-581; it reads MAKYFRNNFI…NQQLTRFSAH (73 aa). The helical transmembrane segment at 582–602 threads the bilayer; that stretch reads VAAWLVSTGVTAACCVAVYYL. Over 603 to 616 the chain is Extracellular; that stretch reads AEYNSEFLKTHRNP. A helical transmembrane segment spans residues 617 to 637; sequence GAVLLLPFVVSCINLAVPRFY. Topologically, residues 638-660 are cytoplasmic; the sequence is SMFRLVERYEIPRQEVYVLLVRN. A helical transmembrane segment spans residues 661–681; the sequence is IFLKISIVGILCYYWLNIVAL. The Extracellular portion of the chain corresponds to 682–694; it reads SGEECWETLIGQD. The chain crosses the membrane as a helical span at residues 695–715; that stretch reads IYRLLLMDFVFSLADSLLGEF. Residues 716 to 749 are Cytoplasmic-facing; that stretch reads LRRLIGMKFTSLSLQEFDIARNVLELIYAQTLTW. Residues 750 to 770 form a helical membrane-spanning segment; that stretch reads LGIFFCPLLPFIQMITLFIMF. Residues 771-796 lie on the Extracellular side of the membrane; the sequence is YVKNVSLMMNFQPPSKAWRASQMITF. The helical transmembrane segment at 797–817 threads the bilayer; that stretch reads FIFLLFFPSFTGVLCTLAITI. The Cytoplasmic segment spans residues 818-861; it reads WRLKPSADCGPFRGLPSFIQSIYSWIDTLSRRPGYLWVVWIYQN. Residues 862–882 form a helical membrane-spanning segment; the sequence is LIGSVHFFFILTLIVLIITYL. Residues 883–967 lie on the Extracellular side of the membrane; it reads YWQITEGRKV…RSAQEENPIA (85 aa).

Belongs to the TMC family. Ubiquitously expressed.

The protein resides in the membrane. In terms of biological role, probable component of an ion channel. Molecular function hasn't been characterized yet. This is Transmembrane channel-like protein 5 from Mus musculus (Mouse).